The sequence spans 422 residues: Histidine--tRNA ligase (422 aa).

This sequence belongs to the class-II aminoacyl-tRNA synthetase family. Homodimer.

Its subcellular location is the cytoplasm. It carries out the reaction tRNA(His) + L-histidine + ATP = L-histidyl-tRNA(His) + AMP + diphosphate + H(+). In Lysinibacillus sphaericus (strain C3-41), this protein is Histidine--tRNA ligase.